The primary structure comprises 167 residues: Osteocalcin 2a (167 aa).

The signal sequence occupies residues 1-18; it reads MKSLTLLTICAVLSVSLS. Residues 19–118 constitute a propeptide that is removed on maturation; that stretch reads MNDLALDVVL…LASVLLRRKR (100 aa). The interval 28–99 is disordered; it reads LDPAPDPATE…TTEDPAAATE (72 aa). The span at 38 to 87 shows a compositional bias: low complexity; that stretch reads PAPAADSSASSSASSSSSSASDSSASASDSSDSDSSSASSSSSSSESASA. A Gla domain is found at 131–163; that stretch reads QVESLSEVCELNLACEHMAETAGIVAAYTAYYG. Residues Glu-133, Glu-137, and Glu-140 each coordinate Ca(2+). Residues Glu-133, Glu-137, and Glu-140 each carry the 4-carboxyglutamate modification. Cys-139 and Cys-145 are disulfide-bonded.

Belongs to the osteocalcin/matrix Gla protein family. Post-translationally, gamma-carboxyglutamate residues are formed by vitamin K dependent carboxylation. These residues are essential for the binding of calcium.

It localises to the secreted. Functionally, binds strongly to apatite and calcium. The protein is Osteocalcin 2a of Oncorhynchus mykiss (Rainbow trout).